Here is a 113-residue protein sequence, read N- to C-terminus: Hydrogenase maturation factor HypA (113 aa).

Histidine 2 contributes to the Ni(2+) binding site. Positions 73, 75, 89, and 92 each coordinate Zn(2+).

Belongs to the HypA/HybF family.

Its function is as follows. Involved in the maturation of [NiFe] hydrogenases. Required for nickel insertion into the metal center of the hydrogenase. The polypeptide is Hydrogenase maturation factor HypA (Methanocella arvoryzae (strain DSM 22066 / NBRC 105507 / MRE50)).